A 208-amino-acid chain; its full sequence is Small ribosomal subunit protein uS4 (208 aa).

Residues 98–161 (TRLDNTVYRL…RKIPVIAEAQ (64 aa)) form the S4 RNA-binding domain.

The protein belongs to the universal ribosomal protein uS4 family. In terms of assembly, part of the 30S ribosomal subunit. Contacts protein S5. The interaction surface between S4 and S5 is involved in control of translational fidelity.

Functionally, one of the primary rRNA binding proteins, it binds directly to 16S rRNA where it nucleates assembly of the body of the 30S subunit. In terms of biological role, with S5 and S12 plays an important role in translational accuracy. The polypeptide is Small ribosomal subunit protein uS4 (Maridesulfovibrio salexigens (strain ATCC 14822 / DSM 2638 / NCIMB 8403 / VKM B-1763) (Desulfovibrio salexigens)).